A 558-amino-acid polypeptide reads, in one-letter code: Potassium-transporting ATPase potassium-binding subunit (558 aa).

A run of 12 helical transmembrane segments spans residues 1–21 (MEII…SGYL), 66–86 (FNGF…WLFL), 127–147 (MIVM…VCIA), 166–186 (IVRF…ILLM), 245–265 (IWSN…MLFL), 281–301 (ALIL…LTMW), 327–347 (FGAG…TGSV), 354–374 (LTPL…VFGG), 377–397 (VGLM…SLMV), 416–436 (IVLV…LAFM), 482–502 (ISTG…QLMI), and 531–551 (IVFI…LGPI).

This sequence belongs to the KdpA family. The system is composed of three essential subunits: KdpA, KdpB and KdpC.

It is found in the cell membrane. Part of the high-affinity ATP-driven potassium transport (or Kdp) system, which catalyzes the hydrolysis of ATP coupled with the electrogenic transport of potassium into the cytoplasm. This subunit binds the extracellular potassium ions and delivers the ions to the membrane domain of KdpB through an intramembrane tunnel. The polypeptide is Potassium-transporting ATPase potassium-binding subunit (Staphylococcus aureus (strain MSSA476)).